Reading from the N-terminus, the 728-residue chain is Putative auxin response factor 20 (728 aa).

The segment at residues 119 to 233 (FFEKQLSPAD…ELLVGVRRAP (115 aa)) is a DNA-binding region (TF-B3 1). Composition is skewed to low complexity over residues 665–689 (PQGS…TTSA) and 700–712 (ASSS…IIPS). The disordered stretch occupies residues 665 to 728 (PQGSDEEAAA…IVNPRDGSQG (64 aa)).

Belongs to the ARF family. As to quaternary structure, homo and heterodimers.

It localises to the nucleus. Functionally, auxin response factors (ARFs) are transcriptional factors that bind specifically to the DNA sequence 5'-TGTCTC-3' found in the auxin-responsive promoter elements (AuxREs). This Oryza sativa subsp. japonica (Rice) protein is Putative auxin response factor 20 (ARF20).